A 124-amino-acid polypeptide reads, in one-letter code: Fluoride-specific ion channel FluC (124 aa).

The next 4 membrane-spanning stretches (helical) occupy residues 4–24 (IVAI…LAGW), 32–52 (GFPY…GLIM), 67–87 (IGLT…SYET), and 96–116 (FITA…CTWL). Na(+)-binding residues include Gly75 and Thr78.

The protein belongs to the fluoride channel Fluc/FEX (TC 1.A.43) family.

Its subcellular location is the cell inner membrane. The catalysed reaction is fluoride(in) = fluoride(out). Its activity is regulated as follows. Na(+) is not transported, but it plays an essential structural role and its presence is essential for fluoride channel function. In terms of biological role, fluoride-specific ion channel. Important for reducing fluoride concentration in the cell, thus reducing its toxicity. The chain is Fluoride-specific ion channel FluC from Geobacter metallireducens (strain ATCC 53774 / DSM 7210 / GS-15).